Reading from the N-terminus, the 164-residue chain is RNA pyrophosphohydrolase (164 aa).

A Nudix hydrolase domain is found at 8–153; that stretch reads PYRSNVGAAL…KRPIYERLAR (146 aa). The short motif at 45 to 66 is the Nudix box element; the sequence is GGIDGDEDPAAAVLRELDEEIG.

Belongs to the Nudix hydrolase family. RppH subfamily. The cofactor is a divalent metal cation.

Accelerates the degradation of transcripts by removing pyrophosphate from the 5'-end of triphosphorylated RNA, leading to a more labile monophosphorylated state that can stimulate subsequent ribonuclease cleavage. This Acidiphilium cryptum (strain JF-5) protein is RNA pyrophosphohydrolase.